Consider the following 424-residue polypeptide: Choline-phosphate cytidylyltransferase (424 aa).

The segment at 1 to 70 is disordered; sequence MANPTTGKSS…RKRRRLTKEF (70 aa). Residues 14 to 24 are compositionally biased toward low complexity; it reads KLSNSSLSNLF. Ser-16 carries the post-translational modification Phosphoserine. Residues 35–44 are compositionally biased toward acidic residues; that stretch reads ETEEQDNEDK. The segment covering 45–55 has biased composition (basic and acidic residues); it reads DESKNQDENKD. At Thr-59 the chain carries Phosphothreonine. CTP contacts are provided by residues 111–119 and Lys-149; that span reads VFDLFHLGH. Residues Lys-149 and Trp-178 each contribute to the substrate site. CTP contacts are provided by residues 195 to 196, Tyr-200, and 223 to 227; these read HD and RTNGV. At Ser-346 the chain carries Phosphoserine. A disordered region spans residues 348-424; sequence ATEFANEFTG…LTQKKKQSAN (77 aa). The segment covering 381-398 has biased composition (low complexity); that stretch reads NSNNTNTNSDSDSNTNST. Ser-401 is modified (phosphoserine; by CK2).

The protein belongs to the cytidylyltransferase family.

It is found in the membrane. The enzyme catalyses phosphocholine + CTP + H(+) = CDP-choline + diphosphate. Its pathway is phospholipid metabolism; phosphatidylcholine biosynthesis; phosphatidylcholine from phosphocholine: step 1/2. Functionally, catalyzes the key rate-limiting step in the CDP-choline pathway for phosphatidylcholine biosynthesis. The chain is Choline-phosphate cytidylyltransferase (PCT1) from Saccharomyces cerevisiae (strain ATCC 204508 / S288c) (Baker's yeast).